Reading from the N-terminus, the 270-residue chain is 5'-AMP-activated protein kinase subunit beta-1 (270 aa).

Residues 1–43 (MGNTSSERAALERHGGHKTPRRDSSGGTKDGDRPKILMDSPED) are disordered. A lipid anchor (N-myristoyl glycine) is attached at glycine 2. Threonine 4 bears the Phosphothreonine mark. Serine 5 and serine 6 each carry phosphoserine. The residue at position 19 (threonine 19) is a Phosphothreonine. Basic and acidic residues predominate over residues 21 to 36 (RRDSSGGTKDGDRPKI). Serine 24 and serine 25 each carry phosphoserine; by autocatalysis. Residues serine 40, serine 96, serine 101, and serine 108 each carry the phosphoserine modification. Residues 68 to 163 (EVNDKAPAQA…QVKKTDFEVF (96 aa)) are glycogen-binding domain. Residue threonine 148 is modified to Phosphothreonine. Serine 182 is modified (phosphoserine).

The protein belongs to the 5'-AMP-activated protein kinase beta subunit family. AMPK is a heterotrimer of an alpha catalytic subunit (PRKAA1 or PRKAA2), a beta (PRKAB1 or PRKAB2) and a gamma non-catalytic subunits (PRKAG1, PRKAG2 or PRKAG3). Interacts with FNIP1 and FNIP2. Phosphorylated when associated with the catalytic subunit (PRKAA1 or PRKAA2). Phosphorylated by ULK1; leading to negatively regulate AMPK activity and suggesting the existence of a regulatory feedback loop between ULK1 and AMPK.

Non-catalytic subunit of AMP-activated protein kinase (AMPK), an energy sensor protein kinase that plays a key role in regulating cellular energy metabolism. In response to reduction of intracellular ATP levels, AMPK activates energy-producing pathways and inhibits energy-consuming processes: inhibits protein, carbohydrate and lipid biosynthesis, as well as cell growth and proliferation. AMPK acts via direct phosphorylation of metabolic enzymes, and by longer-term effects via phosphorylation of transcription regulators. Also acts as a regulator of cellular polarity by remodeling the actin cytoskeleton; probably by indirectly activating myosin. Beta non-catalytic subunit acts as a scaffold on which the AMPK complex assembles, via its C-terminus that bridges alpha (PRKAA1 or PRKAA2) and gamma subunits (PRKAG1, PRKAG2 or PRKAG3). The polypeptide is 5'-AMP-activated protein kinase subunit beta-1 (PRKAB1) (Homo sapiens (Human)).